A 75-amino-acid chain; its full sequence is Small ribosomal subunit protein bS16 (75 aa).

Belongs to the bacterial ribosomal protein bS16 family.

The polypeptide is Small ribosomal subunit protein bS16 (Campylobacter fetus subsp. fetus (strain 82-40)).